The sequence spans 375 residues: Actin, cytoplasmic (375 aa).

This sequence belongs to the actin family.

Its subcellular location is the cytoplasm. The protein resides in the cytoskeleton. The enzyme catalyses ATP + H2O = ADP + phosphate + H(+). Its function is as follows. Actins are highly conserved proteins that are involved in various types of cell motility and are ubiquitously expressed in all eukaryotic cells. The protein is Actin, cytoplasmic of Oxytricha trifallax (Sterkiella histriomuscorum).